The following is a 417-amino-acid chain: Serine hydroxymethyltransferase 3 (417 aa).

(6S)-5,6,7,8-tetrahydrofolate-binding positions include Leu-121 and 125–127 (GHL). Lys-229 is modified (N6-(pyridoxal phosphate)lysine). Position 354 to 356 (354 to 356 (SPF)) interacts with (6S)-5,6,7,8-tetrahydrofolate.

It belongs to the SHMT family. As to quaternary structure, homodimer. Pyridoxal 5'-phosphate serves as cofactor.

It is found in the cytoplasm. It catalyses the reaction (6R)-5,10-methylene-5,6,7,8-tetrahydrofolate + glycine + H2O = (6S)-5,6,7,8-tetrahydrofolate + L-serine. It participates in one-carbon metabolism; tetrahydrofolate interconversion. The protein operates within amino-acid biosynthesis; glycine biosynthesis; glycine from L-serine: step 1/1. Its function is as follows. Catalyzes the reversible interconversion of serine and glycine with tetrahydrofolate (THF) serving as the one-carbon carrier. This reaction serves as the major source of one-carbon groups required for the biosynthesis of purines, thymidylate, methionine, and other important biomolecules. Also exhibits THF-independent aldolase activity toward beta-hydroxyamino acids, producing glycine and aldehydes, via a retro-aldol mechanism. The polypeptide is Serine hydroxymethyltransferase 3 (Pseudomonas aeruginosa (strain ATCC 15692 / DSM 22644 / CIP 104116 / JCM 14847 / LMG 12228 / 1C / PRS 101 / PAO1)).